The sequence spans 244 residues: Small ribosomal subunit protein eS4 (244 aa).

An S4 RNA-binding domain is found at Val-37–Asn-123.

The protein belongs to the eukaryotic ribosomal protein eS4 family.

This chain is Small ribosomal subunit protein eS4 (rps4e), found in Sulfolobus acidocaldarius (strain ATCC 33909 / DSM 639 / JCM 8929 / NBRC 15157 / NCIMB 11770).